A 502-amino-acid polypeptide reads, in one-letter code: Maturase K (502 aa).

It belongs to the intron maturase 2 family. MatK subfamily.

It is found in the plastid. Its subcellular location is the chloroplast. Usually encoded in the trnK tRNA gene intron. Probably assists in splicing its own and other chloroplast group II introns. The sequence is that of Maturase K from Brassica oleracea (Wild cabbage).